The primary structure comprises 196 residues: MFDINKDPFEHFDRLMKEAVAKQIPEANAMSVATVDEKGVPSVRIVYLKEVSQGGFVFYGNYNSHKGKDIETNPIVCLNFHWPAIWQQIRITGKAEKISAAESDAYFATRARLSQIGAWASHQSETIPALDWLSRRVQEYEKQFDGQVVPRPPHWGGWRVIPTEIEFWFGLGGRLHERHIYQRTEDGGWKTFLRSP.

Substrate is bound at residue Lys49. Positions 66 and 88 each coordinate FMN. Positions 106, 110, and 114 each coordinate substrate. FMN contacts are provided by residues 123–124 (QS) and Trp168. 174 to 176 (RLH) lines the substrate pocket. Arg178 lines the FMN pocket.

The protein belongs to the pyridoxamine 5'-phosphate oxidase family. As to quaternary structure, homodimer. It depends on FMN as a cofactor.

It catalyses the reaction pyridoxamine 5'-phosphate + O2 + H2O = pyridoxal 5'-phosphate + H2O2 + NH4(+). The enzyme catalyses pyridoxine 5'-phosphate + O2 = pyridoxal 5'-phosphate + H2O2. Its pathway is cofactor metabolism; pyridoxal 5'-phosphate salvage; pyridoxal 5'-phosphate from pyridoxamine 5'-phosphate: step 1/1. It participates in cofactor metabolism; pyridoxal 5'-phosphate salvage; pyridoxal 5'-phosphate from pyridoxine 5'-phosphate: step 1/1. Functionally, catalyzes the oxidation of either pyridoxine 5'-phosphate (PNP) or pyridoxamine 5'-phosphate (PMP) into pyridoxal 5'-phosphate (PLP). The protein is Pyridoxine/pyridoxamine 5'-phosphate oxidase of Bdellovibrio bacteriovorus (strain ATCC 15356 / DSM 50701 / NCIMB 9529 / HD100).